The sequence spans 419 residues: MLINKFKKDLKLKEYTDLTIVLKDDTCEIEMNVHKTVICIMCKYFENFIKFNSQTEKKSNDKLTVIVPNALITRDIIRNFYDKTSTNSEYPLWRYTLEKIMCRDFLMLDYDSEIIKDLEKIPSEGITLFLEVLSITNYEFSLMTLLKKNISKGYNFKNIPSKIIDELYSYTKPNIIVCMGNENNLELWNIETNKLINNIKLDKPFHHTTNIVCSQNESIIAISDGQTFGLINVLKNTCIYKTYQSKIKYSSSNDSDEDASETESEHNSETESEHNSETESEHNSETESKHNLETKIDLKYNVGNFIKFSRSHNKIIFERDNEIFLWKIIFFPNYECSSYDYNKKKYGCDYYNSYDKKKYKCVVNIDGFPNDKLLYAKKINNFNPKHIYTIYGIKGNEQKTIIFDVPIKIAKYLPMVKIS.

The BTB domain occupies 16-89 (TDLTIVLKDD…FYDKTSTNSE (74 aa)). The interval 250–290 (SSSNDSDEDASETESEHNSETESEHNSETESEHNSETESKH) is disordered. Residues 263 to 290 (ESEHNSETESEHNSETESEHNSETESKH) are compositionally biased toward basic and acidic residues.

Belongs to the mimivirus BTB/WD family.

This chain is Putative BTB/POZ domain-containing protein L85, found in Acanthamoeba polyphaga (Amoeba).